The chain runs to 187 residues: Protein GrpE (187 aa).

A compositionally biased stretch (basic and acidic residues) spans 1–11 (MTDSSNEHETE). Positions 1–23 (MTDSSNEHETENPSVPNPDNEIQ) are disordered.

This sequence belongs to the GrpE family. Homodimer.

The protein resides in the cytoplasm. Participates actively in the response to hyperosmotic and heat shock by preventing the aggregation of stress-denatured proteins, in association with DnaK and GrpE. It is the nucleotide exchange factor for DnaK and may function as a thermosensor. Unfolded proteins bind initially to DnaJ; upon interaction with the DnaJ-bound protein, DnaK hydrolyzes its bound ATP, resulting in the formation of a stable complex. GrpE releases ADP from DnaK; ATP binding to DnaK triggers the release of the substrate protein, thus completing the reaction cycle. Several rounds of ATP-dependent interactions between DnaJ, DnaK and GrpE are required for fully efficient folding. The protein is Protein GrpE of Chlamydia felis (strain Fe/C-56) (Chlamydophila felis).